The following is a 371-amino-acid chain: MAAFPFEIEATDGKARTGVLKTPRGDIRTPAFMPVGTAATVKAMTVDQVKDTGADIILGNTYHLMLRPSAERVKRLGGLHKFMRWDKPILTDSGGFQVMSLSGISKLTEEAVTFSSHVDGSKHVLTPERSIEIQADLLGSDIVMQLDECVAWPAEEARARKGMELSARWAKRSKDAFGTRDTQVLFGIQQGSTFENLRRESSERLREIGFDGYAIGGLAVGEGHQAMCEVLDYAPGFLPEDRPRYLMGVGKPIDLVEAVARGVDMFDCVLPTRSGRHGQAWTWDGPINLKNAKYAEDETPLDPDSDCPASRDYSKAYLRHLFKAEEILGQVLLSWHNIAFFQALTAAMRAAIAEGRFEQFRRDFAARHLGG.

Catalysis depends on Asp92, which acts as the Proton acceptor. Residues 92–96, Asp147, Gln190, and Gly217 each bind substrate; that span reads DSGGF. The tract at residues 248–254 is RNA binding; sequence GVGKPID. Asp267 (nucleophile) is an active-site residue. Residues 272–276 form an RNA binding; important for wobble base 34 recognition region; it reads TRSGR.

Belongs to the queuine tRNA-ribosyltransferase family. Homodimer. Within each dimer, one monomer is responsible for RNA recognition and catalysis, while the other monomer binds to the replacement base PreQ1.

It carries out the reaction 7-aminomethyl-7-carbaguanine + guanosine(34) in tRNA = 7-aminomethyl-7-carbaguanosine(34) in tRNA + guanine. It functions in the pathway tRNA modification; tRNA-queuosine biosynthesis. In terms of biological role, catalyzes the base-exchange of a guanine (G) residue with the queuine precursor 7-aminomethyl-7-deazaguanine (PreQ1) at position 34 (anticodon wobble position) in tRNAs with GU(N) anticodons (tRNA-Asp, -Asn, -His and -Tyr). Catalysis occurs through a double-displacement mechanism. The nucleophile active site attacks the C1' of nucleotide 34 to detach the guanine base from the RNA, forming a covalent enzyme-RNA intermediate. The proton acceptor active site deprotonates the incoming PreQ1, allowing a nucleophilic attack on the C1' of the ribose to form the product. After dissociation, two additional enzymatic reactions on the tRNA convert PreQ1 to queuine (Q), resulting in the hypermodified nucleoside queuosine (7-(((4,5-cis-dihydroxy-2-cyclopenten-1-yl)amino)methyl)-7-deazaguanosine). This is Queuine tRNA-ribosyltransferase from Caulobacter vibrioides (strain ATCC 19089 / CIP 103742 / CB 15) (Caulobacter crescentus).